We begin with the raw amino-acid sequence, 488 residues long: N-succinylglutamate 5-semialdehyde dehydrogenase (488 aa).

NAD(+) is bound at residue 221–226 (GSSRTG). Active-site residues include Glu244 and Cys278.

This sequence belongs to the aldehyde dehydrogenase family. AstD subfamily.

The catalysed reaction is N-succinyl-L-glutamate 5-semialdehyde + NAD(+) + H2O = N-succinyl-L-glutamate + NADH + 2 H(+). Its pathway is amino-acid degradation; L-arginine degradation via AST pathway; L-glutamate and succinate from L-arginine: step 4/5. Its function is as follows. Catalyzes the NAD-dependent reduction of succinylglutamate semialdehyde into succinylglutamate. The chain is N-succinylglutamate 5-semialdehyde dehydrogenase from Pseudomonas savastanoi pv. phaseolicola (strain 1448A / Race 6) (Pseudomonas syringae pv. phaseolicola (strain 1448A / Race 6)).